We begin with the raw amino-acid sequence, 1358 residues long: Probable serine/threonine-protein kinase ifkB (1358 aa).

The region spanning 1 to 582 (MIGKGGFGVV…TKQLLESGLL (582 aa)) is the Protein kinase domain. Residues 2-10 (IGKGGFGVV) and K25 contribute to the ATP site. Positions 125–359 (GANNTAGGGD…SSSRKKPPKE (235 aa)) are disordered. The span at 136–148 (VSNANSNKSMIVG) shows a compositional bias: polar residues. Positions 149–196 (NNNKKLTLSSSNTSSSSSLLSNNKSKILNTSKSTSTNTSTSTSTSNTN) are enriched in low complexity. Over residues 197–208 (KNKKISKKKKSK) the composition is skewed to basic residues. The span at 258 to 285 (NNNNDSNNNYHSDNESDSFSGSISMSDG) shows a compositional bias: low complexity. The segment covering 306 to 333 (DDNENDDDDEEDDDDEYDEEDDDYETFD) has biased composition (acidic residues). The span at 342 to 351 (SNNSKLSTSS) shows a compositional bias: low complexity. The active-site Proton acceptor is D413. 2 disordered regions span residues 445–470 (DDLNSSTSNAANNINLSSSTNSTAQQ) and 1148–1204 (GSGG…QQTS). Residues 447–466 (LNSSTSNAANNINLSSSTNS) are compositionally biased toward low complexity. Gly residues predominate over residues 1148 to 1172 (GSGGSGGSGGGSSMSSGGGGGGNSN). A compositionally biased stretch (low complexity) spans 1185 to 1199 (SNQSTSSSGNSNNSN).

It belongs to the protein kinase superfamily. Ser/Thr protein kinase family. GCN2 subfamily.

The enzyme catalyses L-seryl-[protein] + ATP = O-phospho-L-seryl-[protein] + ADP + H(+). The catalysed reaction is L-threonyl-[protein] + ATP = O-phospho-L-threonyl-[protein] + ADP + H(+). The protein is Probable serine/threonine-protein kinase ifkB (ifkB) of Dictyostelium discoideum (Social amoeba).